Reading from the N-terminus, the 440-residue chain is COP9 signalosome complex subunit 5 (440 aa).

The MPN domain occupies 71-218 (VLISKLSCEK…MGAFRTIESK (148 aa)). Residues histidine 164, histidine 166, and aspartate 177 each coordinate Zn(2+). A JAMM motif motif is present at residues 164-177 (HSHPGYDCWLSNID). The span at 319–341 (TQRGDSTETSSFGSMFSGDNTSD) shows a compositional bias: polar residues. Disordered regions lie at residues 319–343 (TQRG…SDVD) and 375–399 (SSRS…CHDE).

Belongs to the peptidase M67A family. CSN5 subfamily. As to quaternary structure, component of a COP9 signalosome-like (CSN) complex, composed of at least RRI1/CSN5, CSN9, RRI2/CSN10, PCI8/CSN11, CSN12 and CSI1. Within this complex it probably interacts directly with CSN12. Also interacts with RPN5. A divalent metal cation is required as a cofactor.

The protein resides in the cytoplasm. The protein localises to the nucleus. Its function is as follows. Catalytic component of the COP9 signalosome (CSN) complex that acts as an regulator of the ubiquitin (Ubl) conjugation pathway by mediating the deneddylation of the cullin subunit of SCF-type E3 ubiquitin-protein ligase complexes. The CSN complex is involved in the regulation of the mating pheromone response. The protein is COP9 signalosome complex subunit 5 (RRI1) of Saccharomyces cerevisiae (strain ATCC 204508 / S288c) (Baker's yeast).